The chain runs to 712 residues: MARQTPITRYRNIGISAHIDAGKTTTTERILFYTGVSHKIGEVHDGAATMDWMEQEQERGITITSAATTCFWSGMGNQFPQYRINVIDTPGHVDFTIEVERSMRVLDGACMVYCAVGGVQPQSETVWRQANKYKVPRLAFVNKMDRTGANFFRVVEQMKTRLGANPVPIVVPIGAEDTFTGVVDLIEMKAIIWDEASQGMKFEYGEIPADLVDTAQEWRTNMVEAAAEASEELMDKYLEEGDLSKEDIIAGLRARTLASEIQVMLCGSAFKNKGVQRMLDAVIEFLPSPTEVKAIEGILDDKDETKASREASDEAPFSALAFKIMNDKFVGNLTFVRVYSGVLKQGDAVYNPVKSKRERIGRIVQMHANERQDIDEIRAGDIAACVGLKDVTTGDTLCDEKNIITLERMEFPDPVIQLAVEPKTKADQEKMSIALGRLAKEDPSFRVHTDEESGQTIIAGMGELHLDIIVDRMKREFGVEANIGKPMVAYRETIKKTVEQEGKFVRQTGGKGKFGHVYVRLEPLDVEAAGKEYEFAEEVVGGVVPKEFFGAVDKGIQERMKNGVLAGYPVVGVKAVLFDGSYHDVDSDELSFKMAGSYAFRDGFMKADPVLLEPIMKVEVETPEDYMGDIMGDLNRRRGMVQGMDDLPGGTKAIKAEVPLAEMFGYATQMRSMSQGRATYSMEFAKYAETPRNVAEGIIAKFQAGGKKGDDE.

The region spanning 8 to 290 (TRYRNIGISA…AVIEFLPSPT (283 aa)) is the tr-type G domain. GTP-binding positions include 17–24 (AHIDAGKT), 88–92 (DTPGH), and 142–145 (NKMD).

The protein belongs to the TRAFAC class translation factor GTPase superfamily. Classic translation factor GTPase family. EF-G/EF-2 subfamily.

It is found in the cytoplasm. Its function is as follows. Catalyzes the GTP-dependent ribosomal translocation step during translation elongation. During this step, the ribosome changes from the pre-translocational (PRE) to the post-translocational (POST) state as the newly formed A-site-bound peptidyl-tRNA and P-site-bound deacylated tRNA move to the P and E sites, respectively. Catalyzes the coordinated movement of the two tRNA molecules, the mRNA and conformational changes in the ribosome. The sequence is that of Elongation factor G from Acinetobacter baumannii (strain SDF).